The primary structure comprises 147 residues: MRFDSNQLGNVEVDETTIITFPQGIPALENCTRFKLFHDITQPTPQMYWLQSLDDPGITFSLALPDRLGVRFQIELSDEEVAQLQLSGPQDAAILLMLYRPLDLDRDSHPVLGALQANLCNPLVISLSSRRGIQKTGLKIDILLHTP.

The protein belongs to the FliW family. In terms of assembly, interacts with translational regulator CsrA and flagellin(s).

It is found in the cytoplasm. Functionally, acts as an anti-CsrA protein, binds CsrA and prevents it from repressing translation of its target genes, one of which is flagellin. Binds to flagellin and participates in the assembly of the flagellum. The chain is Flagellar assembly factor FliW from Chromobacterium violaceum (strain ATCC 12472 / DSM 30191 / JCM 1249 / CCUG 213 / NBRC 12614 / NCIMB 9131 / NCTC 9757 / MK).